The following is a 157-amino-acid chain: MTEILGLPITRPVKVGIVVADFNDLVTTRLLAGAQQALRQAGIPEENILVVQVPGAMELPRVTRRLSETGVIDGVIALGAVVQGETDHYTYVCQQSAAGLAQASLTGPIPVMFGVLMTANMDQALNRAGGKGGNKGRECAQALLQVLSVEQQLSELR.

Residues Phe22, 56–58 (AME), and 80–82 (AVV) contribute to the 5-amino-6-(D-ribitylamino)uracil site. 85 to 86 (ET) is a (2S)-2-hydroxy-3-oxobutyl phosphate binding site. His88 (proton donor) is an active-site residue. Position 113 (Phe113) interacts with 5-amino-6-(D-ribitylamino)uracil. Arg127 contributes to the (2S)-2-hydroxy-3-oxobutyl phosphate binding site.

This sequence belongs to the DMRL synthase family.

It carries out the reaction (2S)-2-hydroxy-3-oxobutyl phosphate + 5-amino-6-(D-ribitylamino)uracil = 6,7-dimethyl-8-(1-D-ribityl)lumazine + phosphate + 2 H2O + H(+). It functions in the pathway cofactor biosynthesis; riboflavin biosynthesis; riboflavin from 2-hydroxy-3-oxobutyl phosphate and 5-amino-6-(D-ribitylamino)uracil: step 1/2. Catalyzes the formation of 6,7-dimethyl-8-ribityllumazine by condensation of 5-amino-6-(D-ribitylamino)uracil with 3,4-dihydroxy-2-butanone 4-phosphate. This is the penultimate step in the biosynthesis of riboflavin. The protein is 6,7-dimethyl-8-ribityllumazine synthase of Levilactobacillus brevis (strain ATCC 367 / BCRC 12310 / CIP 105137 / JCM 1170 / LMG 11437 / NCIMB 947 / NCTC 947) (Lactobacillus brevis).